A 318-amino-acid chain; its full sequence is Thioredoxin reductase (318 aa).

36-43 (TGMQQGGQ) is an FAD binding site. A disulfide bond links Cys136 and Cys139. FAD is bound at residue 286–295 (DVMDHNYRQA).

It belongs to the class-II pyridine nucleotide-disulfide oxidoreductase family. In terms of assembly, homodimer. The cofactor is FAD.

The protein resides in the cytoplasm. The catalysed reaction is [thioredoxin]-dithiol + NADP(+) = [thioredoxin]-disulfide + NADPH + H(+). This chain is Thioredoxin reductase (trxB), found in Vibrio cholerae serotype O1 (strain ATCC 39315 / El Tor Inaba N16961).